The chain runs to 329 residues: 4-hydroxythreonine-4-phosphate dehydrogenase (329 aa).

Residues H136 and T137 each contribute to the substrate site. Residues H166, H211, and H266 each coordinate a divalent metal cation. Substrate is bound by residues K274, N283, and R292.

Belongs to the PdxA family. As to quaternary structure, homodimer. Zn(2+) is required as a cofactor. Requires Mg(2+) as cofactor. It depends on Co(2+) as a cofactor.

The protein localises to the cytoplasm. It catalyses the reaction 4-(phosphooxy)-L-threonine + NAD(+) = 3-amino-2-oxopropyl phosphate + CO2 + NADH. The protein operates within cofactor biosynthesis; pyridoxine 5'-phosphate biosynthesis; pyridoxine 5'-phosphate from D-erythrose 4-phosphate: step 4/5. Its function is as follows. Catalyzes the NAD(P)-dependent oxidation of 4-(phosphooxy)-L-threonine (HTP) into 2-amino-3-oxo-4-(phosphooxy)butyric acid which spontaneously decarboxylates to form 3-amino-2-oxopropyl phosphate (AHAP). The chain is 4-hydroxythreonine-4-phosphate dehydrogenase from Citrobacter koseri (strain ATCC BAA-895 / CDC 4225-83 / SGSC4696).